A 116-amino-acid chain; its full sequence is HTH-type transcriptional regulator SarV (116 aa).

The segment at residues 51-74 (RDTLHFEMLWDTSKIDVIIRKIYK) is a DNA-binding region (H-T-H motif).

The protein belongs to the SarA family.

The protein resides in the cytoplasm. In terms of biological role, part of the pathway by which MgrA and SarA control autolysis. The sequence is that of HTH-type transcriptional regulator SarV (sarV) from Staphylococcus aureus (strain Mu50 / ATCC 700699).